Reading from the N-terminus, the 210-residue chain is Riboflavin kinase (210 aa).

The tract at residues 1-81 (MECRERRLAA…DLLRYFNIAS (81 aa)) is H-T-H motif-like. Positions 82 to 210 (IRLVGRVVSG…GDVVEVEVLL (129 aa)) are riboflavin kinase. A CDP-binding site is contributed by 91–96 (GLGEGA). Mg(2+) is bound by residues T120 and N122. FMN is bound by residues T177 and E185. 190–193 (VKLR) lines the CDP pocket.

The protein belongs to the archaeal riboflavin kinase family. Mg(2+) serves as cofactor.

It catalyses the reaction riboflavin + CTP = CDP + FMN + H(+). Its pathway is cofactor biosynthesis; FMN biosynthesis; FMN from riboflavin (CTP route): step 1/1. In terms of biological role, catalyzes the CTP-dependent phosphorylation of riboflavin (vitamin B2) to form flavin mononucleotide (FMN). The chain is Riboflavin kinase (ribK) from Pyrobaculum arsenaticum (strain DSM 13514 / JCM 11321 / PZ6).